A 349-amino-acid chain; its full sequence is Increased DNA methylation 2 (349 aa).

Residues 210-230 form a disordered region; it reads EDNAGTCTSGEESDVAAKPEV. The sHSP domain maps to 233-349; it reads EAHGGLMVGL…VMKNLQKQTV (117 aa).

It belongs to the small heat shock protein (HSP20) family. Homodimer or oligomer. May form an 16-mer complex. Interacts with MBD7 (via C-terminus). Interacts with IDM1 (via N-terminus). Interacts with IMD3. Part of a complex made of MBD7, IDM1, IDM2, IDM3 and ROS1. As to expression, expressed in cotyledons and hypocotyls in young seedlings.

The protein resides in the nucleus. The protein localises to the nucleoplasm. Prevents DNA hypermethylation and transcriptional silencing of transgenes and of some endogenous genes. May act as a molecular chaperone of IDM1, regulating its H3K18 acetylation activity. This chain is Increased DNA methylation 2, found in Arabidopsis thaliana (Mouse-ear cress).